A 150-amino-acid polypeptide reads, in one-letter code: Putative pre-16S rRNA nuclease (150 aa).

It belongs to the YqgF nuclease family.

It localises to the cytoplasm. Functionally, could be a nuclease involved in processing of the 5'-end of pre-16S rRNA. The protein is Putative pre-16S rRNA nuclease of Chlamydia felis (strain Fe/C-56) (Chlamydophila felis).